Here is a 970-residue protein sequence, read N- to C-terminus: ATP-dependent DNA helicase DDX11 (970 aa).

The 437-residue stretch at 9-445 (GAIHFPFPFT…KNLMYLKQIL (437 aa)) folds into the Helicase ATP-binding domain. An ATP-binding site is contributed by 44–51 (SPTGTGKS). S262 carries the phosphoserine modification. [4Fe-4S] cluster-binding residues include C267 and C285. Positions 289–304 (QRSRHEKKKGAEEEKP) are enriched in basic and acidic residues. The tract at residues 289–312 (QRSRHEKKKGAEEEKPKRRRQEKQ) is disordered. [4Fe-4S] cluster-binding residues include C315 and C350. The DEAH box motif lies at 393–396 (DEAH). The interval 818–849 (TLSPRPGTPREGSGGEPVHEGRQPVHRQGHQA) is disordered.

The protein belongs to the DEAD box helicase family. DEAH subfamily. DDX11/CHL1 sub-subfamily. Associates with the CTF18-RFC complex. Associates with a cohesin complex composed of RAD21, SMC1 proteins and SMC3. Interacts with CHTF18. Interacts with DSCC1. Interacts with FEN1; this interaction is direct and increases flap endonuclease activity of FEN1. Interacts with PCNA. Interacts with POLR1A and UBTF. Interacts with RAD21, SMC1 proteins and SMC3. Interacts with RFC2. Interacts with TIMELESS; this interaction increases recruitment of both proteins onto chromatin in response to replication stress induction by hydroxyurea. In terms of assembly, (Microbial infection) Interacts with bovine papillomavirus type 1 regulatory protein E2; this interaction stimulates the recruitment of E2 onto mitotic chromosomes. The cofactor is Mg(2+). Requires [4Fe-4S] cluster as cofactor. In terms of tissue distribution, expressed in melanoma cells. Not detected in epidermal melanocytes of normal skin (at protein level). Highly expressed in spleen, B-cells, thymus, testis, ovary, small intestine and pancreas. Very low expression seen in brain. Expressed in dividing cells and/or cells undergoing high levels of recombination. No expression detected in cells signaled to terminally differentiate. Expressed weakly in keratinocytes.

It is found in the nucleus. Its subcellular location is the nucleolus. The protein localises to the cytoplasm. The protein resides in the cytoskeleton. It localises to the spindle pole. It is found in the midbody. Its subcellular location is the microtubule organizing center. The protein localises to the centrosome. The protein resides in the chromosome. It catalyses the reaction Couples ATP hydrolysis with the unwinding of duplex DNA at the replication fork by translocating in the 5'-3' direction. This creates two antiparallel DNA single strands (ssDNA). The leading ssDNA polymer is the template for DNA polymerase III holoenzyme which synthesizes a continuous strand.. The enzyme catalyses ATP + H2O = ADP + phosphate + H(+). Its activity is regulated as follows. ATPase activity is stimulated by high magnesium salt levels (up to a 0.1 M), and potassium salts (glutamate, chloride or acetate) are more effective than the corresponding sodium salts. ATPase activity is enhanced by the long non-coding RNA (lncRNA) cohesion regulator noncoding RNA (CONCR). Double-stranded DNA helicase activity is maximal with magnesium ions at low concentrations (0.5-1 mM) whereas is markedly inhibited at higher levels (5 mM and above). Double-stranded DNA helicase activity is stimulated by 25-50 mM potassium acetate, stimulated to a lesser extent by 25 mM of ammonium acetate, and markedly inhibited by sodium acetate. DNA-dependent ATPase and ATP-dependent DNA helicase that participates in various functions in genomic stability, including DNA replication, DNA repair and heterochromatin organization as well as in ribosomal RNA synthesis. Its double-stranded DNA helicase activity requires either a minimal 5'-single-stranded tail length of approximately 15 nt (flap substrates) or 10 nt length single-stranded gapped DNA substrates of a partial duplex DNA structure for helicase loading and translocation along DNA in a 5' to 3' direction. The helicase activity is capable of displacing duplex regions up to 100 bp, which can be extended up to 500 bp by the replication protein A (RPA) or the cohesion CTF18-replication factor C (Ctf18-RFC) complex activities. Also shows ATPase- and helicase activities on substrates that mimic key DNA intermediates of replication, repair and homologous recombination reactions, including forked duplex, anti-parallel G-quadruplex and three-stranded D-loop DNA molecules. Plays a role in DNA double-strand break (DSB) repair at the DNA replication fork during DNA replication recovery from DNA damage. Recruited with TIMELESS factor upon DNA-replication stress response at DNA replication fork to preserve replication fork progression, and hence ensure DNA replication fidelity. Also cooperates with TIMELESS factor during DNA replication to regulate proper sister chromatid cohesion and mitotic chromosome segregation. Stimulates 5'-single-stranded DNA flap endonuclease activity of FEN1 in an ATP- and helicase-independent manner; and hence it may contribute in Okazaki fragment processing at DNA replication fork during lagging strand DNA synthesis. Its ability to function at DNA replication fork is modulated by its binding to long non-coding RNA (lncRNA) cohesion regulator non-coding RNA DDX11-AS1/CONCR, which is able to increase both DDX11 ATPase activity and binding to DNA replicating regions. Also plays a role in heterochromatin organization. Involved in rRNA transcription activation through binding to active hypomethylated rDNA gene loci by recruiting UBTF and the RNA polymerase Pol I transcriptional machinery. Plays a role in embryonic development and prevention of aneuploidy. Involved in melanoma cell proliferation and survival. Associates with chromatin at DNA replication fork regions. Binds to single- and double-stranded DNAs. Its function is as follows. (Microbial infection) Required for bovine papillomavirus type 1 regulatory protein E2 loading onto mitotic chromosomes during DNA replication for the viral genome to be maintained and segregated. The chain is ATP-dependent DNA helicase DDX11 from Homo sapiens (Human).